Here is a 375-residue protein sequence, read N- to C-terminus: Dihydroorotate dehydrogenase (quinone) (375 aa).

FMN is bound by residues 78 to 82 (AGLDK) and threonine 102. Lysine 82 lines the substrate pocket. 127–131 (NRMGF) lines the substrate pocket. FMN is bound by residues asparagine 159 and asparagine 192. Residue asparagine 192 coordinates substrate. The active-site Nucleophile is the serine 195. Substrate is bound at residue asparagine 197. FMN contacts are provided by lysine 230 and threonine 258. 259–260 (NT) contributes to the substrate binding site. FMN is bound by residues glycine 288, glycine 317, and 338-339 (YT).

This sequence belongs to the dihydroorotate dehydrogenase family. Type 2 subfamily. As to quaternary structure, monomer. FMN serves as cofactor.

It is found in the cell membrane. It catalyses the reaction (S)-dihydroorotate + a quinone = orotate + a quinol. It functions in the pathway pyrimidine metabolism; UMP biosynthesis via de novo pathway; orotate from (S)-dihydroorotate (quinone route): step 1/1. In terms of biological role, catalyzes the conversion of dihydroorotate to orotate with quinone as electron acceptor. This is Dihydroorotate dehydrogenase (quinone) from Cyanothece sp. (strain PCC 7425 / ATCC 29141).